Reading from the N-terminus, the 86-residue chain is Putative membrane protein insertion efficiency factor (86 aa).

The protein belongs to the UPF0161 family.

Its subcellular location is the cell inner membrane. In terms of biological role, could be involved in insertion of integral membrane proteins into the membrane. This chain is Putative membrane protein insertion efficiency factor, found in Mannheimia succiniciproducens (strain KCTC 0769BP / MBEL55E).